The sequence spans 329 residues: DNA-directed RNA polymerase subunit alpha (329 aa).

The segment at 1–235 is alpha N-terminal domain (alpha-NTD); that stretch reads MQGSVTEFLK…EQLDAFVDLR (235 aa). The interval 249-329 is alpha C-terminal domain (alpha-CTD); it reads FDPILLRPVD…NWPPASIAED (81 aa).

Belongs to the RNA polymerase alpha chain family. In terms of assembly, homodimer. The RNAP catalytic core consists of 2 alpha, 1 beta, 1 beta' and 1 omega subunit. When a sigma factor is associated with the core the holoenzyme is formed, which can initiate transcription.

It carries out the reaction RNA(n) + a ribonucleoside 5'-triphosphate = RNA(n+1) + diphosphate. Functionally, DNA-dependent RNA polymerase catalyzes the transcription of DNA into RNA using the four ribonucleoside triphosphates as substrates. The sequence is that of DNA-directed RNA polymerase subunit alpha from Photobacterium profundum (strain SS9).